Consider the following 265-residue polypeptide: Orotidine 5'-phosphate decarboxylase (265 aa).

Residues D38, 60–62 (KTH), 91–100 (DRKFADIGNT), Y213, and R232 each bind substrate. The active-site Proton donor is K93.

It belongs to the OMP decarboxylase family.

It catalyses the reaction orotidine 5'-phosphate + H(+) = UMP + CO2. It functions in the pathway pyrimidine metabolism; UMP biosynthesis via de novo pathway; UMP from orotate: step 2/2. The protein is Orotidine 5'-phosphate decarboxylase (pyrG) of Mucor circinelloides f. lusitanicus (Mucor racemosus var. lusitanicus).